Here is a 399-residue protein sequence, read N- to C-terminus: Inositol polyphosphate 1-phosphatase (399 aa).

Asp-54 lines the Li(+) pocket. Glu-79 is a Mg(2+) binding site. Glu-80 provides a ligand contact to Li(+). Asp-153 and Ile-155 together coordinate Mg(2+). 9 residues coordinate 1D-myo-inositol 1,4-bisphosphate: Asp-156, Ser-157, Thr-158, Ser-267, Lys-269, Gly-289, Ala-290, Lys-293, and Thr-311. Asp-316 serves as a coordination point for Mg(2+). Ser-317 carries the post-translational modification Phosphoserine.

It belongs to the inositol monophosphatase superfamily. In terms of assembly, monomer. Mg(2+) serves as cofactor. Ubiquitously expressed, with highest levels in pancreas and kidney.

The enzyme catalyses 1D-myo-inositol 1,4-bisphosphate + H2O = 1D-myo-inositol 4-phosphate + phosphate. The catalysed reaction is 1D-myo-inositol 1,3,4-trisphosphate + H2O = 1D-myo-inositol 3,4-bisphosphate + phosphate. Its pathway is signal transduction; phosphatidylinositol signaling pathway. Its activity is regulated as follows. Inhibited by Li(+). In terms of biological role, mg(2+)-dependent phosphatase that catalyzes the hydrolysis of the 1-position phosphate from inositol 1,4-bisphosphate and inositol 1,3,4-trisphosphate and participates in inositol phosphate metabolism. This Homo sapiens (Human) protein is Inositol polyphosphate 1-phosphatase.